The following is a 142-amino-acid chain: MSTQVAKKSEVKKNWYIVDLDGKVLGRAATEIARVLRGKHKAIYSPSVDTGDFVVVVNAEKVKLTGNKMSAKMYYRHSGYPGGLRQANAAQMLEKKPEDLIKKAVKGMLPKNKLGRDMFRKLKVYTGSDHPHAAQQPLELNI.

The protein belongs to the universal ribosomal protein uL13 family. As to quaternary structure, part of the 50S ribosomal subunit.

Functionally, this protein is one of the early assembly proteins of the 50S ribosomal subunit, although it is not seen to bind rRNA by itself. It is important during the early stages of 50S assembly. The sequence is that of Large ribosomal subunit protein uL13 from Syntrophotalea carbinolica (strain DSM 2380 / NBRC 103641 / GraBd1) (Pelobacter carbinolicus).